The sequence spans 181 residues: Large ribosomal subunit protein uL5 (181 aa).

It belongs to the universal ribosomal protein uL5 family. As to quaternary structure, part of the 50S ribosomal subunit; part of the 5S rRNA/L5/L18/L25 subcomplex. Contacts the 5S rRNA and the P site tRNA. Forms a bridge to the 30S subunit in the 70S ribosome.

Its function is as follows. This is one of the proteins that bind and probably mediate the attachment of the 5S RNA into the large ribosomal subunit, where it forms part of the central protuberance. In the 70S ribosome it contacts protein S13 of the 30S subunit (bridge B1b), connecting the 2 subunits; this bridge is implicated in subunit movement. Contacts the P site tRNA; the 5S rRNA and some of its associated proteins might help stabilize positioning of ribosome-bound tRNAs. The polypeptide is Large ribosomal subunit protein uL5 (Rickettsia canadensis (strain McKiel)).